A 302-amino-acid polypeptide reads, in one-letter code: Deoxyhypusine hydroxylase-B (302 aa).

HEAT-like PBS-type repeat units lie at residues 49–75, 82–108, 171–200, 204–230, and 237–263; these read LAHEAAFALGQMQDAEAIPALEAVLKD, VRHEAAEALGAIGLEKSISLLEESLAV, MYERYAALFALRNDSGDAAVSAIVAALGVK, LRHEVAYVLGQLQNKAASDALSTVLKN, and VRHEAAEALGSIADQESIALLEEFAKD. Fe cation-binding residues include His51, Glu52, His84, and Glu85. The Fe cation site is built by His206, Glu207, His239, and Glu240.

Belongs to the deoxyhypusine hydroxylase family. Fe(2+) serves as cofactor.

The catalysed reaction is [eIF5A protein]-deoxyhypusine + AH2 + O2 = [eIF5A protein]-hypusine + A + H2O. Its pathway is protein modification; eIF5A hypusination. Functionally, catalyzes the hydroxylation of the N(6)-(4-aminobutyl)-L-lysine intermediate to form hypusine, an essential post-translational modification only found in mature eIF-5A factor. This Oryza sativa subsp. japonica (Rice) protein is Deoxyhypusine hydroxylase-B.